The primary structure comprises 903 residues: Translation initiation factor IF-2 (903 aa).

The interval 66–296 (QATLKGEGPV…GRSRKREMEN (231 aa)) is disordered. Residues 121 to 132 (NTDETRVQEHKP) show a composition bias toward basic and acidic residues. 2 stretches are compositionally biased toward low complexity: residues 139-152 (AGDA…AAAG) and 178-195 (AATG…GQQS). A compositionally biased stretch (basic and acidic residues) spans 204 to 231 (EGRSRQDENKGSAREDQANRFATRDKEA). The segment covering 246–255 (RRPAHSKPLR) has biased composition (basic residues). Composition is skewed to basic and acidic residues over residues 263–276 (VTKD…DRSN) and 285–296 (ESGRSRKREMEN). One can recognise a tr-type G domain in the interval 403–572 (ERPPVVTVMG…LLTADVAELK (170 aa)). Residues 412-419 (GHVDHGKT) are G1. Residue 412–419 (GHVDHGKT) coordinates GTP. The tract at residues 437–441 (GITQH) is G2. Positions 458 to 461 (DTPG) are G3. GTP contacts are provided by residues 458 to 462 (DTPGH) and 512 to 515 (NKID). The segment at 512–515 (NKID) is G4. Residues 548-550 (SAV) are G5.

The protein belongs to the TRAFAC class translation factor GTPase superfamily. Classic translation factor GTPase family. IF-2 subfamily.

Its subcellular location is the cytoplasm. One of the essential components for the initiation of protein synthesis. Protects formylmethionyl-tRNA from spontaneous hydrolysis and promotes its binding to the 30S ribosomal subunits. Also involved in the hydrolysis of GTP during the formation of the 70S ribosomal complex. This is Translation initiation factor IF-2 from Moorella thermoacetica (strain ATCC 39073 / JCM 9320).